The sequence spans 322 residues: MLNSFKLSLQYILPKLWLTRLAGWGASKRAGWLTKLVIDLFVKYYKVDMKEAQKPDTASYRTFNEFFVRPLRDEVRPIDTDPNVLVMPADGVISQLGKIEEDKILQAKGHNYSLEALLAGNYLMADLFRNGTFVTTYLSPRDYHRVHMPCNGILREMIYVPGDLFSVNHLTAQNVPNLFARNERVICLFDTEFGPMAQILVGATIVGSIETVWAGTITPPREGIIKRWTWPAGENDGSVALLKGQEMGRFKLGSTVINLFAPGKVNLVEQLESLSVTKIGQPLAVSTETFVTPDAEPSPLPAEEIEAEHDASPLVDDKKDQV.

Residues D90, H147, and S254 each act as charge relay system; for autoendoproteolytic cleavage activity in the active site. Residue S254 is the Schiff-base intermediate with substrate; via pyruvic acid; for decarboxylase activity of the active site. S254 is subject to Pyruvic acid (Ser); by autocatalysis. Positions 292–322 (TPDAEPSPLPAEEIEAEHDASPLVDDKKDQV) are disordered. Positions 308–322 (EHDASPLVDDKKDQV) are enriched in basic and acidic residues.

The protein belongs to the phosphatidylserine decarboxylase family. PSD-B subfamily. Prokaryotic type I sub-subfamily. As to quaternary structure, heterodimer of a large membrane-associated beta subunit and a small pyruvoyl-containing alpha subunit. Pyruvate serves as cofactor. Post-translationally, is synthesized initially as an inactive proenzyme. Formation of the active enzyme involves a self-maturation process in which the active site pyruvoyl group is generated from an internal serine residue via an autocatalytic post-translational modification. Two non-identical subunits are generated from the proenzyme in this reaction, and the pyruvate is formed at the N-terminus of the alpha chain, which is derived from the carboxyl end of the proenzyme. The autoendoproteolytic cleavage occurs by a canonical serine protease mechanism, in which the side chain hydroxyl group of the serine supplies its oxygen atom to form the C-terminus of the beta chain, while the remainder of the serine residue undergoes an oxidative deamination to produce ammonia and the pyruvoyl prosthetic group on the alpha chain. During this reaction, the Ser that is part of the protease active site of the proenzyme becomes the pyruvoyl prosthetic group, which constitutes an essential element of the active site of the mature decarboxylase.

It localises to the cell membrane. The enzyme catalyses a 1,2-diacyl-sn-glycero-3-phospho-L-serine + H(+) = a 1,2-diacyl-sn-glycero-3-phosphoethanolamine + CO2. It participates in phospholipid metabolism; phosphatidylethanolamine biosynthesis; phosphatidylethanolamine from CDP-diacylglycerol: step 2/2. Its function is as follows. Catalyzes the formation of phosphatidylethanolamine (PtdEtn) from phosphatidylserine (PtdSer). In Escherichia coli O7:K1 (strain IAI39 / ExPEC), this protein is Phosphatidylserine decarboxylase proenzyme.